The chain runs to 521 residues: Probable glycine dehydrogenase (decarboxylating) subunit 2 (521 aa).

The residue at position 279 (K279) is an N6-(pyridoxal phosphate)lysine.

This sequence belongs to the GcvP family. C-terminal subunit subfamily. As to quaternary structure, the glycine cleavage system is composed of four proteins: P, T, L and H. In this organism, the P 'protein' is a heterodimer of two subunits. It depends on pyridoxal 5'-phosphate as a cofactor.

The catalysed reaction is N(6)-[(R)-lipoyl]-L-lysyl-[glycine-cleavage complex H protein] + glycine + H(+) = N(6)-[(R)-S(8)-aminomethyldihydrolipoyl]-L-lysyl-[glycine-cleavage complex H protein] + CO2. The glycine cleavage system catalyzes the degradation of glycine. The P protein binds the alpha-amino group of glycine through its pyridoxal phosphate cofactor; CO(2) is released and the remaining methylamine moiety is then transferred to the lipoamide cofactor of the H protein. The protein is Probable glycine dehydrogenase (decarboxylating) subunit 2 of Staphylothermus marinus (strain ATCC 43588 / DSM 3639 / JCM 9404 / F1).